The chain runs to 163 residues: Large ribosomal subunit protein uL15 (163 aa).

The segment covering 1 to 29 has biased composition (basic residues); that stretch reads MSKKRRQRGSRTHGGGSHKNRRGAGHRGG. Disordered regions lie at residues 1 to 59 and 135 to 163; these read MSKK…KTRR and VADG…DEES. Composition is skewed to basic and acidic residues over residues 33 to 46 and 142 to 154; these read AGRD…HEPL and LSER…AEKD.

It belongs to the universal ribosomal protein uL15 family. In terms of assembly, part of the 50S ribosomal subunit.

Its function is as follows. Binds to the 23S rRNA. The polypeptide is Large ribosomal subunit protein uL15 (Natronomonas pharaonis (strain ATCC 35678 / DSM 2160 / CIP 103997 / JCM 8858 / NBRC 14720 / NCIMB 2260 / Gabara) (Halobacterium pharaonis)).